A 522-amino-acid chain; its full sequence is E3 ubiquitin-protein ligase DMA2 (522 aa).

Disordered regions lie at residues 1–56 (MYTP…RPAS) and 69–92 (QNSQTASSSAAPDQRLFGTTPSNS). A compositionally biased stretch (low complexity) spans 14–35 (APTSSMTSNSSSASNANTTSSS). Positions 36 to 49 (GINPRNRASGTPSN) are enriched in polar residues. Serine 206 bears the Phosphoserine mark. Glycyl lysine isopeptide (Lys-Gly) (interchain with G-Cter in ubiquitin) cross-links involve residues lysine 211, lysine 256, lysine 258, lysine 288, lysine 310, lysine 333, lysine 343, lysine 346, lysine 366, lysine 406, lysine 412, and lysine 423. One can recognise an FHA domain in the interval 295–358 (LVIGRYTERV…SGTFLNHQRL (64 aa)). The RING-type; atypical zinc-finger motif lies at 433 to 477 (CSICLCKIKPCQAIFISPCAHSWHFRCVRRLVMLSYPQFVCPNCR).

It belongs to the DMA1 family. UBC4-dependent autoubiquitination occurs at Lys-211, Lys-258, Lys-288, Lys-310, Lys-333, Lys-343, Lys-346, Lys-366, Lys-406, Lys-412 and Lys-423. UBC13/MMS2-dependent autoubiquitination occurs at Lys-258, Lys-310, Lys-346 and Lys-366. Lys-211, Lys-256, Lys-288, Lys-310, Lys-343, Lys-258, Lys-366 and Lys-412 are also ubiquitinated in trans by DMA1 E3 ligase in association with UBC4.

It localises to the cytoplasm. It catalyses the reaction S-ubiquitinyl-[E2 ubiquitin-conjugating enzyme]-L-cysteine + [acceptor protein]-L-lysine = [E2 ubiquitin-conjugating enzyme]-L-cysteine + N(6)-ubiquitinyl-[acceptor protein]-L-lysine.. In terms of biological role, E3 ubiquitin-protein ligase which functions in cell cycle retarding in conjunction with the UBC4 and UBC13/MMS2 complex, 2 E2 ubiquitin conjugating enzymes. Involved in nutritional control of the cell cycle. Required for proper spindle positioning, likely regulating septin ring deposition at the bud neck. The chain is E3 ubiquitin-protein ligase DMA2 (DMA2) from Saccharomyces cerevisiae (strain YJM789) (Baker's yeast).